We begin with the raw amino-acid sequence, 682 residues long: Probable methyltransferase PMT12 (682 aa).

Over Met-1–Arg-11 the chain is Cytoplasmic. Residues Asn-12–Gly-32 form a helical; Signal-anchor for type II membrane protein membrane-spanning segment. The Lumenal segment spans residues Lys-33–Ala-682. Asn-67, Asn-103, Asn-125, Asn-155, Asn-173, Asn-193, Asn-273, Asn-350, Asn-395, Asn-419, Asn-600, and Asn-625 each carry an N-linked (GlcNAc...) asparagine glycan.

It belongs to the methyltransferase superfamily.

It localises to the golgi apparatus membrane. The protein is Probable methyltransferase PMT12 of Arabidopsis thaliana (Mouse-ear cress).